We begin with the raw amino-acid sequence, 71 residues long: ATP synthase subunit c (71 aa).

A run of 2 helical transmembrane segments spans residues 4–24 (AVIGAGIAVLTGLGAGIGIGI) and 48–68 (IIGAGLAEATAIYGLIIAFMI).

Belongs to the ATPase C chain family. As to quaternary structure, F-type ATPases have 2 components, F(1) - the catalytic core - and F(0) - the membrane proton channel. F(1) has five subunits: alpha(3), beta(3), gamma(1), delta(1), epsilon(1). F(0) has three main subunits: a(1), b(2) and c(10-14). The alpha and beta chains form an alternating ring which encloses part of the gamma chain. F(1) is attached to F(0) by a central stalk formed by the gamma and epsilon chains, while a peripheral stalk is formed by the delta and b chains.

It localises to the cell membrane. Functionally, f(1)F(0) ATP synthase produces ATP from ADP in the presence of a proton or sodium gradient. F-type ATPases consist of two structural domains, F(1) containing the extramembraneous catalytic core and F(0) containing the membrane proton channel, linked together by a central stalk and a peripheral stalk. During catalysis, ATP synthesis in the catalytic domain of F(1) is coupled via a rotary mechanism of the central stalk subunits to proton translocation. Key component of the F(0) channel; it plays a direct role in translocation across the membrane. A homomeric c-ring of between 10-14 subunits forms the central stalk rotor element with the F(1) delta and epsilon subunits. This Clostridium botulinum (strain Alaska E43 / Type E3) protein is ATP synthase subunit c.